The chain runs to 98 residues: Large ribosomal subunit protein uL23 (98 aa).

The protein belongs to the universal ribosomal protein uL23 family. As to quaternary structure, part of the 50S ribosomal subunit. Contacts protein L29, and trigger factor when it is bound to the ribosome.

One of the early assembly proteins it binds 23S rRNA. One of the proteins that surrounds the polypeptide exit tunnel on the outside of the ribosome. Forms the main docking site for trigger factor binding to the ribosome. This chain is Large ribosomal subunit protein uL23, found in Lactobacillus johnsonii (strain CNCM I-12250 / La1 / NCC 533).